A 260-amino-acid polypeptide reads, in one-letter code: 14-3-3-like protein C (260 aa).

Belongs to the 14-3-3 family.

The sequence is that of 14-3-3-like protein C from Nicotiana tabacum (Common tobacco).